A 292-amino-acid chain; its full sequence is 4-hydroxy-tetrahydrodipicolinate synthase (292 aa).

Pyruvate is bound at residue threonine 44. The active-site Proton donor/acceptor is tyrosine 132. Residue lysine 161 is the Schiff-base intermediate with substrate of the active site. Pyruvate is bound at residue isoleucine 203.

Belongs to the DapA family. Homotetramer; dimer of dimers.

The protein resides in the cytoplasm. The enzyme catalyses L-aspartate 4-semialdehyde + pyruvate = (2S,4S)-4-hydroxy-2,3,4,5-tetrahydrodipicolinate + H2O + H(+). It participates in amino-acid biosynthesis; L-lysine biosynthesis via DAP pathway; (S)-tetrahydrodipicolinate from L-aspartate: step 3/4. Its function is as follows. Catalyzes the condensation of (S)-aspartate-beta-semialdehyde [(S)-ASA] and pyruvate to 4-hydroxy-tetrahydrodipicolinate (HTPA). The polypeptide is 4-hydroxy-tetrahydrodipicolinate synthase (Fervidobacterium nodosum (strain ATCC 35602 / DSM 5306 / Rt17-B1)).